A 504-amino-acid chain; its full sequence is ATP synthase subunit alpha (504 aa).

170-177 (GDRQTGKT) is an ATP binding site.

It belongs to the ATPase alpha/beta chains family. As to quaternary structure, F-type ATPases have 2 components, CF(1) - the catalytic core - and CF(0) - the membrane proton channel. CF(1) has five subunits: alpha(3), beta(3), gamma(1), delta(1), epsilon(1). CF(0) has four main subunits: a(1), b(1), b'(1) and c(9-12).

It is found in the cellular thylakoid membrane. It carries out the reaction ATP + H2O + 4 H(+)(in) = ADP + phosphate + 5 H(+)(out). Functionally, produces ATP from ADP in the presence of a proton gradient across the membrane. The alpha chain is a regulatory subunit. This Prochlorococcus marinus (strain NATL2A) protein is ATP synthase subunit alpha.